A 327-amino-acid chain; its full sequence is GMP reductase (327 aa).

C176 serves as the catalytic Thioimidate intermediate. Residue 205–228 participates in NADP(+) binding; sequence IIADGGIRTHGDIAKSIRFGASMV.

It belongs to the IMPDH/GMPR family. GuaC type 2 subfamily.

The catalysed reaction is IMP + NH4(+) + NADP(+) = GMP + NADPH + 2 H(+). Functionally, catalyzes the irreversible NADPH-dependent deamination of GMP to IMP. It functions in the conversion of nucleobase, nucleoside and nucleotide derivatives of G to A nucleotides, and in maintaining the intracellular balance of A and G nucleotides. This Streptococcus pyogenes serotype M3 (strain ATCC BAA-595 / MGAS315) protein is GMP reductase.